A 421-amino-acid polypeptide reads, in one-letter code: Testin (421 aa).

Positions 92 to 199 (MILTNPVAAK…GDVKLPREMD (108 aa)) constitute a PET domain. Residues 133–164 (EKQPVAGSEGAQYRKKQLAKQLPAHDQDPSKC) form a disordered region. Basic and acidic residues predominate over residues 155–164 (PAHDQDPSKC). LIM zinc-binding domains are found at residues 234–297 (YSCY…CDSE), 299–359 (PRCA…NHAV), and 362–421 (QGCH…KMMS).

The protein belongs to the prickle / espinas / testin family. Interacts via LIM domain 1 with ZYX. Interacts (via LIM domain 3) with ENAH and VASP. Interacts with ALKBH4, talin, actin, alpha-actinin, GRIP1 and PXN. Interacts (via LIM domain 2) with ACTL7A (via N-terminus). Heterodimer with ACTL7A; the heterodimer interacts with ENAH to form a heterotrimer.

The protein resides in the cytoplasm. It is found in the cell junction. The protein localises to the focal adhesion. Functionally, scaffold protein that may play a role in cell adhesion, cell spreading and in the reorganization of the actin cytoskeleton. Plays a role in the regulation of cell proliferation. May act as a tumor suppressor. The protein is Testin (TES) of Neofelis nebulosa (Clouded leopard).